The primary structure comprises 887 residues: Alanine--tRNA ligase (887 aa).

4 residues coordinate Zn(2+): His-564, His-568, Cys-676, and His-680.

The protein belongs to the class-II aminoacyl-tRNA synthetase family. Requires Zn(2+) as cofactor.

It is found in the cytoplasm. The catalysed reaction is tRNA(Ala) + L-alanine + ATP = L-alanyl-tRNA(Ala) + AMP + diphosphate. Functionally, catalyzes the attachment of alanine to tRNA(Ala) in a two-step reaction: alanine is first activated by ATP to form Ala-AMP and then transferred to the acceptor end of tRNA(Ala). Also edits incorrectly charged Ser-tRNA(Ala) and Gly-tRNA(Ala) via its editing domain. This chain is Alanine--tRNA ligase, found in Chelativorans sp. (strain BNC1).